The following is an 878-amino-acid chain: Aconitate hydratase A (878 aa).

[4Fe-4S] cluster-binding residues include C426, C492, and C495.

The protein belongs to the aconitase/IPM isomerase family. In terms of assembly, monomer. The cofactor is [4Fe-4S] cluster.

It catalyses the reaction citrate = D-threo-isocitrate. It carries out the reaction (2S,3R)-3-hydroxybutane-1,2,3-tricarboxylate = 2-methyl-cis-aconitate + H2O. It functions in the pathway carbohydrate metabolism; tricarboxylic acid cycle; isocitrate from oxaloacetate: step 2/2. Its pathway is organic acid metabolism; propanoate degradation. Involved in the catabolism of short chain fatty acids (SCFA) via the tricarboxylic acid (TCA)(acetyl degradation route) and probably the 2-methylcitrate cycle I (propionate degradation route). Catalyzes the reversible isomerization of citrate to isocitrate via cis-aconitate. Could catalyze the hydration of 2-methyl-cis-aconitate to yield (2R,3S)-2-methylisocitrate. The apo form of AcnA functions as a RNA-binding regulatory protein. The protein is Aconitate hydratase A (acnA) of Rickettsia typhi (strain ATCC VR-144 / Wilmington).